The chain runs to 2837 residues: Probable polyketide synthase 3 (2837 aa).

Residues Asn39–Asp464 enclose the Ketosynthase family 3 (KS3) domain. Active-site for beta-ketoacyl synthase activity residues include Cys209, His348, and His388. An acyl/malonyl transferase region spans residues Gly664 to Tyr697. Residue Ser674 is the For acyl/malonyl transferase activity of the active site. Positions Ile962–Gly1084 are N-terminal hotdog fold. The PKS/mFAS DH domain occupies Ile962–Ser1255. Catalysis depends on His995, which acts as the Proton acceptor; for dehydratase activity. The tract at residues Asn1106 to Ser1255 is C-terminal hotdog fold. Asp1169 (proton donor; for dehydratase activity) is an active-site residue. Positions Asp2330–Leu2407 constitute a Carrier domain. At Ser2367 the chain carries O-(pantetheine 4'-phosphoryl)serine. The helical transmembrane segment at Lys2464 to Val2484 threads the bilayer.

The cofactor is pantetheine 4'-phosphate.

The protein resides in the membrane. Functionally, probable polyketide synthase. This chain is Probable polyketide synthase 3 (pks3), found in Dictyostelium discoideum (Social amoeba).